We begin with the raw amino-acid sequence, 93 residues long: Phosphoribosyl-ATP pyrophosphatase (93 aa).

It belongs to the PRA-PH family.

Its subcellular location is the cytoplasm. The enzyme catalyses 1-(5-phospho-beta-D-ribosyl)-ATP + H2O = 1-(5-phospho-beta-D-ribosyl)-5'-AMP + diphosphate + H(+). The protein operates within amino-acid biosynthesis; L-histidine biosynthesis; L-histidine from 5-phospho-alpha-D-ribose 1-diphosphate: step 2/9. This chain is Phosphoribosyl-ATP pyrophosphatase, found in Rhodococcus jostii (strain RHA1).